Here is a 445-residue protein sequence, read N- to C-terminus: Proline--tRNA ligase (445 aa).

Belongs to the class-II aminoacyl-tRNA synthetase family. ProS type 2 subfamily. Homodimer.

It localises to the cytoplasm. It catalyses the reaction tRNA(Pro) + L-proline + ATP = L-prolyl-tRNA(Pro) + AMP + diphosphate. Its function is as follows. Catalyzes the attachment of proline to tRNA(Pro) in a two-step reaction: proline is first activated by ATP to form Pro-AMP and then transferred to the acceptor end of tRNA(Pro). The sequence is that of Proline--tRNA ligase from Dinoroseobacter shibae (strain DSM 16493 / NCIMB 14021 / DFL 12).